Consider the following 188-residue polypeptide: Protease-associated domain-containing protein 1 (188 aa).

Positions 1–21 (MSRGAAGWCCLVLWLPTCVAA) are cleaved as a signal peptide. In terms of domain architecture, PA spans 83–163 (IQDQIALVER…RSLEQHGLPW (81 aa)). N-linked (GlcNAc...) asparagine glycans are attached at residues Asn121 and Asn171.

Post-translationally, N-glycosylated; required for efficient secretion. In terms of tissue distribution, expressed in metabolically active tissues such as liver, muscle, adipose, and heart and different brain regions like cortex and hypothalamus, expression is acutely regulated by the nutritional state.

Its subcellular location is the secreted. Plays a role in the modulation of physical activity and adiposity. The chain is Protease-associated domain-containing protein 1 from Mus musculus (Mouse).